Consider the following 281-residue polypeptide: Src-like-adapter (281 aa).

The interval Met-1 to Glu-20 is disordered. The N-myristoyl glycine moiety is linked to residue Gly-2. Residues Ser-7 to Glu-20 show a composition bias toward low complexity. In terms of domain architecture, SH3 spans Leu-22–His-82. Residues Trp-84 to Cys-175 enclose the SH2 domain. Residues Cys-190 to Asp-281 are SLA C-terminal. At Ser-258 the chain carries Phosphoserine. Tyr-278 is subject to Phosphotyrosine.

In terms of assembly, homodimer. Interacts with phosphorylated CBL, SYK and LAT. Homodimerization and interaction with phosphorylated CBL occurs via its C-terminal domain. Interacts with PDGFRB and EPHA2. Interacts with phosphorylated proteins ZAP70; CD3Z; VAV1 and LCP2 via its SH2 domain. In terms of tissue distribution, predominantly expressed in lymphoid tissues. Highly expressed in spleen, thymus and lymph nodes. Weakly expressed in lung and brain. Expressed in T-cells and at low level in B-cells.

Its subcellular location is the cytoplasm. The protein localises to the endosome. Adapter protein, which negatively regulates T-cell receptor (TCR) signaling. Inhibits T-cell antigen-receptor induced activation of nuclear factor of activated T-cells. Involved in the negative regulation of positive selection and mitosis of T-cells. May act by linking signaling proteins such as ZAP70 with CBL, leading to a CBL dependent degradation of signaling proteins. This is Src-like-adapter (Sla) from Mus musculus (Mouse).